The chain runs to 502 residues: ATP synthase subunit alpha (502 aa).

169 to 176 contacts ATP; it reads GDRQTGKT.

Belongs to the ATPase alpha/beta chains family. As to quaternary structure, F-type ATPases have 2 components, CF(1) - the catalytic core - and CF(0) - the membrane proton channel. CF(1) has five subunits: alpha(3), beta(3), gamma(1), delta(1), epsilon(1). CF(0) has three main subunits: a(1), b(2) and c(9-12). The alpha and beta chains form an alternating ring which encloses part of the gamma chain. CF(1) is attached to CF(0) by a central stalk formed by the gamma and epsilon chains, while a peripheral stalk is formed by the delta and b chains.

It is found in the cell membrane. The enzyme catalyses ATP + H2O + 4 H(+)(in) = ADP + phosphate + 5 H(+)(out). Its function is as follows. Produces ATP from ADP in the presence of a proton gradient across the membrane. The alpha chain is a regulatory subunit. The protein is ATP synthase subunit alpha of Streptococcus pyogenes serotype M18 (strain MGAS8232).